Here is a 404-residue protein sequence, read N- to C-terminus: GTPase Obg (404 aa).

The Obg domain occupies 1 to 159 (MKFIDEARIE…RALRLELKVL (159 aa)). The segment at 22–43 (SFRREKFIPRGGPDGGDGGRGG) is disordered. The span at 33-43 (GPDGGDGGRGG) shows a compositional bias: gly residues. The region spanning 160 to 334 (ADVGLLGMPN…LVFAIQDFLD (175 aa)) is the OBG-type G domain. GTP contacts are provided by residues 166-173 (GMPNAGKS), 191-195 (FTTLA), 213-216 (DIPG), 284-287 (NKLD), and 315-317 (SAL). The Mg(2+) site is built by Ser-173 and Thr-193. The segment at 373–404 (LLAEGETGTGDDGRDGNENDPADEQDTNRPNH) is disordered.

This sequence belongs to the TRAFAC class OBG-HflX-like GTPase superfamily. OBG GTPase family. Monomer. It depends on Mg(2+) as a cofactor.

It is found in the cytoplasm. Its function is as follows. An essential GTPase which binds GTP, GDP and possibly (p)ppGpp with moderate affinity, with high nucleotide exchange rates and a fairly low GTP hydrolysis rate. Plays a role in control of the cell cycle, stress response, ribosome biogenesis and in those bacteria that undergo differentiation, in morphogenesis control. The polypeptide is GTPase Obg (Aromatoleum aromaticum (strain DSM 19018 / LMG 30748 / EbN1) (Azoarcus sp. (strain EbN1))).